The chain runs to 317 residues: Methionyl-tRNA formyltransferase (317 aa).

111–114 (SLLP) serves as a coordination point for (6S)-5,6,7,8-tetrahydrofolate.

This sequence belongs to the Fmt family.

It carries out the reaction L-methionyl-tRNA(fMet) + (6R)-10-formyltetrahydrofolate = N-formyl-L-methionyl-tRNA(fMet) + (6S)-5,6,7,8-tetrahydrofolate + H(+). Functionally, attaches a formyl group to the free amino group of methionyl-tRNA(fMet). The formyl group appears to play a dual role in the initiator identity of N-formylmethionyl-tRNA by promoting its recognition by IF2 and preventing the misappropriation of this tRNA by the elongation apparatus. This chain is Methionyl-tRNA formyltransferase, found in Chlorobium phaeobacteroides (strain BS1).